The following is a 285-amino-acid chain: Bifunctional protein FolD (285 aa).

NADP(+) is bound by residues 165–167 (GRS), Ser190, and Ile231.

The protein belongs to the tetrahydrofolate dehydrogenase/cyclohydrolase family. As to quaternary structure, homodimer.

The enzyme catalyses (6R)-5,10-methylene-5,6,7,8-tetrahydrofolate + NADP(+) = (6R)-5,10-methenyltetrahydrofolate + NADPH. It carries out the reaction (6R)-5,10-methenyltetrahydrofolate + H2O = (6R)-10-formyltetrahydrofolate + H(+). It participates in one-carbon metabolism; tetrahydrofolate interconversion. In terms of biological role, catalyzes the oxidation of 5,10-methylenetetrahydrofolate to 5,10-methenyltetrahydrofolate and then the hydrolysis of 5,10-methenyltetrahydrofolate to 10-formyltetrahydrofolate. This is Bifunctional protein FolD from Magnetococcus marinus (strain ATCC BAA-1437 / JCM 17883 / MC-1).